Consider the following 298-residue polypeptide: Heme A synthase (298 aa).

Residues 1–6 (MHRSLK) are Cytoplasmic-facing. A helical membrane pass occupies residues 7-27 (IFGTLTSIGMVIVLMQGALVT). Residues 28-62 (KTESGEGCGATWPLCFGEVIPTNPAIETIIEYSHR) are Extracellular-facing. Cysteine 35 and cysteine 42 are oxidised to a cystine. Residue glutamate 58 is part of the active site. Heme o is bound at residue histidine 61. A helical transmembrane segment spans residues 63–83 (IVSGLLGAMVIILAIWAWRKL). Residues 84 to 92 (SHIRETKVM) are Cytoplasmic-facing. A helical membrane pass occupies residues 93-113 (AILAVLFIIFQGLLGAGAVVF). The Extracellular portion of the chain corresponds to 114-117 (GQSH). A helical membrane pass occupies residues 118–138 (AILALHFGISAISLATVVLLT). Residue histidine 123 coordinates heme o. Residues 139–158 (TLAFEDGKPNPPALIVKKGY) are Cytoplasmic-facing. The helical transmembrane segment at 159 to 179 (KGYILAVFAYCYAVIYTGAYV) threads the bilayer. The Extracellular portion of the chain corresponds to 180-209 (KHTQATLACGDFPLCNGQWIPMLSGPVGAH). A disulfide bond links cysteine 188 and cysteine 194. A helical membrane pass occupies residues 210 to 230 (FFHRVAGTLLLILLVVALIWT). Histidine 212 is a binding site for heme b. Residues 231 to 244 (LRKYSHYRSLVWTH) are Cytoplasmic-facing. Residues 245-265 (ILCVILVLTQYATGISIVLTG) traverse the membrane as a helical segment. Over 266 to 271 (NELFVA) the chain is Extracellular. Residues 272-292 (MMHALIVSILFTTLCYIVMIL) form a helical membrane-spanning segment. Residue histidine 274 participates in heme b binding. Residues 293–298 (SRNKAV) are Cytoplasmic-facing.

It belongs to the COX15/CtaA family. Type 1 subfamily. Interacts with CtaB. The cofactor is heme b.

The protein localises to the cell membrane. The catalysed reaction is Fe(II)-heme o + 2 A + H2O = Fe(II)-heme a + 2 AH2. The protein operates within porphyrin-containing compound metabolism; heme A biosynthesis; heme A from heme O: step 1/1. Catalyzes the conversion of heme O to heme A by two successive hydroxylations of the methyl group at C8. The first hydroxylation forms heme I, the second hydroxylation results in an unstable dihydroxymethyl group, which spontaneously dehydrates, resulting in the formyl group of heme A. The chain is Heme A synthase from Halalkalibacterium halodurans (strain ATCC BAA-125 / DSM 18197 / FERM 7344 / JCM 9153 / C-125) (Bacillus halodurans).